A 78-amino-acid polypeptide reads, in one-letter code: MFPSWSTTFVLCMGLCSLMNGALAQYDEGASIEDFEFRSACTTANNVCERMADTCCPGLQCIGCNPLDPDDDGHCSCQ.

A signal peptide spans 1 to 24; sequence MFPSWSTTFVLCMGLCSLMNGALA.

This sequence belongs to the scoloptoxin-13 family. In terms of processing, contains 4 disulfide bonds. Expressed by the venom gland.

The protein resides in the secreted. The chain is U-scoloptoxin(13)-Er1a from Ethmostigmus rubripes (Giant centipede).